Reading from the N-terminus, the 292-residue chain is Bis(5'-nucleosyl)-tetraphosphatase, symmetrical (292 aa).

It belongs to the Ap4A hydrolase family.

It catalyses the reaction P(1),P(4)-bis(5'-adenosyl) tetraphosphate + H2O = 2 ADP + 2 H(+). In terms of biological role, hydrolyzes diadenosine 5',5'''-P1,P4-tetraphosphate to yield ADP. In Yersinia enterocolitica serotype O:8 / biotype 1B (strain NCTC 13174 / 8081), this protein is Bis(5'-nucleosyl)-tetraphosphatase, symmetrical.